Here is a 193-residue protein sequence, read N- to C-terminus: ATP synthase subunit b (193 aa).

The helical transmembrane segment at 24-44 (PLAELIVGLLAFGLLVGFFFW) threads the bilayer.

The protein belongs to the ATPase B chain family. In terms of assembly, F-type ATPases have 2 components, F(1) - the catalytic core - and F(0) - the membrane proton channel. F(1) has five subunits: alpha(3), beta(3), gamma(1), delta(1), epsilon(1). F(0) has three main subunits: a(1), b(2) and c(10-14). The alpha and beta chains form an alternating ring which encloses part of the gamma chain. F(1) is attached to F(0) by a central stalk formed by the gamma and epsilon chains, while a peripheral stalk is formed by the delta and b chains.

It localises to the cell membrane. Functionally, f(1)F(0) ATP synthase produces ATP from ADP in the presence of a proton or sodium gradient. F-type ATPases consist of two structural domains, F(1) containing the extramembraneous catalytic core and F(0) containing the membrane proton channel, linked together by a central stalk and a peripheral stalk. During catalysis, ATP synthesis in the catalytic domain of F(1) is coupled via a rotary mechanism of the central stalk subunits to proton translocation. In terms of biological role, component of the F(0) channel, it forms part of the peripheral stalk, linking F(1) to F(0). The chain is ATP synthase subunit b from Parafrankia sp. (strain EAN1pec).